We begin with the raw amino-acid sequence, 260 residues long: Carbonic anhydrase (260 aa).

Residues 1–31 are disordered; the sequence is MAHAWGYGPADGPESWAESFPIANGPRQSPI. Positions 3–259 constitute an Alpha-carbonic anhydrase domain; sequence HAWGYGPADG…LKGRKVRASF (257 aa). Histidine 64 (proton acceptor) is an active-site residue. Zn(2+) contacts are provided by histidine 94, histidine 96, and histidine 119. The active site involves tyrosine 127. 198–199 contacts substrate; the sequence is TT.

This sequence belongs to the alpha-carbonic anhydrase family. Zn(2+) serves as cofactor.

It carries out the reaction hydrogencarbonate + H(+) = CO2 + H2O. Reversible hydration of carbon dioxide. The sequence is that of Carbonic anhydrase (cahz) from Danio rerio (Zebrafish).